Reading from the N-terminus, the 213-residue chain is Large ribosomal subunit protein bL25 (213 aa).

Residues 191–207 (AEPTDAPTAPAAAPGAE) are compositionally biased toward low complexity. The interval 191–213 (AEPTDAPTAPAAAPGAEAPKDKA) is disordered.

The protein belongs to the bacterial ribosomal protein bL25 family. CTC subfamily. As to quaternary structure, part of the 50S ribosomal subunit; part of the 5S rRNA/L5/L18/L25 subcomplex. Contacts the 5S rRNA. Binds to the 5S rRNA independently of L5 and L18.

In terms of biological role, this is one of the proteins that binds to the 5S RNA in the ribosome where it forms part of the central protuberance. The chain is Large ribosomal subunit protein bL25 from Polynucleobacter asymbioticus (strain DSM 18221 / CIP 109841 / QLW-P1DMWA-1) (Polynucleobacter necessarius subsp. asymbioticus).